We begin with the raw amino-acid sequence, 186 residues long: Inner membrane-spanning protein YciB (186 aa).

5 consecutive transmembrane segments (helical) span residues 10–30, 47–67, 76–96, 121–141, and 149–169; these read IILFFAAFKVWGIYVATAVAI, VEPLQWLSLGVIVLFGGATLL, WKPTVLYWLMGGTLLVGQLMF, WGWTGFFATMGVLNLWVAYHF, and FKLFGGIGLMFAFVIAQALYL.

The protein belongs to the YciB family.

It localises to the cell inner membrane. Functionally, plays a role in cell envelope biogenesis, maintenance of cell envelope integrity and membrane homeostasis. The chain is Inner membrane-spanning protein YciB from Acidovorax ebreus (strain TPSY) (Diaphorobacter sp. (strain TPSY)).